Reading from the N-terminus, the 551-residue chain is Glucose-6-phosphate isomerase (551 aa).

Glutamate 352 acts as the Proton donor in catalysis. Catalysis depends on residues histidine 383 and lysine 511.

The protein belongs to the GPI family.

Its subcellular location is the cytoplasm. It carries out the reaction alpha-D-glucose 6-phosphate = beta-D-fructose 6-phosphate. It functions in the pathway carbohydrate biosynthesis; gluconeogenesis. Its pathway is carbohydrate degradation; glycolysis; D-glyceraldehyde 3-phosphate and glycerone phosphate from D-glucose: step 2/4. Functionally, catalyzes the reversible isomerization of glucose-6-phosphate to fructose-6-phosphate. This Chlorobium luteolum (strain DSM 273 / BCRC 81028 / 2530) (Pelodictyon luteolum) protein is Glucose-6-phosphate isomerase.